The sequence spans 314 residues: Ribosomal RNA small subunit methyltransferase H (314 aa).

Residues 36–38 (GGH), Asp-56, Phe-82, Asp-104, and Gln-111 each bind S-adenosyl-L-methionine.

This sequence belongs to the methyltransferase superfamily. RsmH family.

Its subcellular location is the cytoplasm. The enzyme catalyses cytidine(1402) in 16S rRNA + S-adenosyl-L-methionine = N(4)-methylcytidine(1402) in 16S rRNA + S-adenosyl-L-homocysteine + H(+). Specifically methylates the N4 position of cytidine in position 1402 (C1402) of 16S rRNA. The chain is Ribosomal RNA small subunit methyltransferase H from Ectopseudomonas mendocina (strain ymp) (Pseudomonas mendocina).